We begin with the raw amino-acid sequence, 118 residues long: Ribonuclease P protein component (118 aa).

It belongs to the RnpA family. In terms of assembly, consists of a catalytic RNA component (M1 or rnpB) and a protein subunit.

It carries out the reaction Endonucleolytic cleavage of RNA, removing 5'-extranucleotides from tRNA precursor.. RNaseP catalyzes the removal of the 5'-leader sequence from pre-tRNA to produce the mature 5'-terminus. It can also cleave other RNA substrates such as 4.5S RNA. The protein component plays an auxiliary but essential role in vivo by binding to the 5'-leader sequence and broadening the substrate specificity of the ribozyme. The sequence is that of Ribonuclease P protein component from Shewanella amazonensis (strain ATCC BAA-1098 / SB2B).